The chain runs to 124 residues: Ribonuclease pancreatic (124 aa).

Positions 1–13 (KETAAAKFERQHM) are enriched in basic and acidic residues. The segment at 1–24 (KETAAAKFERQHMDSSTSSASSSN) is disordered. Lys7 and Arg10 together coordinate substrate. His12 serves as the catalytic Proton acceptor. 4 cysteine pairs are disulfide-bonded: Cys26-Cys84, Cys40-Cys95, Cys58-Cys110, and Cys65-Cys72. Residues 41 to 45 (KPVBT), Lys66, and Arg85 each bind substrate. His119 (proton donor) is an active-site residue.

Belongs to the pancreatic ribonuclease family. In terms of assembly, monomer. Interacts with and forms tight 1:1 complexes with RNH1. Dimerization of two such complexes may occur. Interaction with RNH1 inhibits this protein. As to expression, pancreas.

The protein resides in the secreted. It catalyses the reaction an [RNA] containing cytidine + H2O = an [RNA]-3'-cytidine-3'-phosphate + a 5'-hydroxy-ribonucleotide-3'-[RNA].. The catalysed reaction is an [RNA] containing uridine + H2O = an [RNA]-3'-uridine-3'-phosphate + a 5'-hydroxy-ribonucleotide-3'-[RNA].. Functionally, endonuclease that catalyzes the cleavage of RNA on the 3' side of pyrimidine nucleotides. Acts on single-stranded and double-stranded RNA. The sequence is that of Ribonuclease pancreatic (RNASE1) from Boselaphus tragocamelus (Nilgai).